A 431-amino-acid chain; its full sequence is Histidinol dehydrogenase (431 aa).

Residues Tyr-127, Gln-185, and Asn-208 each coordinate NAD(+). Substrate is bound by residues Ser-234, Gln-256, and His-259. The Zn(2+) site is built by Gln-256 and His-259. Active-site proton acceptor residues include Glu-323 and His-324. Substrate contacts are provided by His-324, Asp-357, Glu-411, and His-416. A Zn(2+)-binding site is contributed by Asp-357. A Zn(2+)-binding site is contributed by His-416.

This sequence belongs to the histidinol dehydrogenase family. Zn(2+) serves as cofactor.

It carries out the reaction L-histidinol + 2 NAD(+) + H2O = L-histidine + 2 NADH + 3 H(+). It participates in amino-acid biosynthesis; L-histidine biosynthesis; L-histidine from 5-phospho-alpha-D-ribose 1-diphosphate: step 9/9. In terms of biological role, catalyzes the sequential NAD-dependent oxidations of L-histidinol to L-histidinaldehyde and then to L-histidine. This chain is Histidinol dehydrogenase, found in Vibrio vulnificus (strain CMCP6).